The chain runs to 78 residues: Acyl carrier protein (78 aa).

In terms of domain architecture, Carrier spans 4-78 (AEIRDKVYDI…QQAIDYIVKK (75 aa)). An O-(pantetheine 4'-phosphoryl)serine modification is found at S39.

This sequence belongs to the acyl carrier protein (ACP) family. 4'-phosphopantetheine is transferred from CoA to a specific serine of apo-ACP by AcpS. This modification is essential for activity because fatty acids are bound in thioester linkage to the sulfhydryl of the prosthetic group.

It localises to the cytoplasm. It participates in lipid metabolism; fatty acid biosynthesis. In terms of biological role, carrier of the growing fatty acid chain in fatty acid biosynthesis. The polypeptide is Acyl carrier protein (Chlorobium luteolum (strain DSM 273 / BCRC 81028 / 2530) (Pelodictyon luteolum)).